Here is a 462-residue protein sequence, read N- to C-terminus: NADH-quinone oxidoreductase subunit N 1 (462 aa).

15 helical membrane passes run 4-24 (FVVA…VLCL), 32-52 (AGFY…WAVA), 60-80 (IACF…ALLA), 88-108 (FAGD…LLLA), 113-133 (WIML…LIAA), 148-168 (FLPG…IYAA), 178-198 (LAAP…GVGF), 220-240 (VAAF…LHVC), 251-271 (LWPA…LGAV), 279-299 (LLAY…MAVN), 307-327 (LFYL…VGAL), 351-371 (AGVL…AGFV), 374-394 (FLVF…FGII), 416-436 (LIAH…ALGV), and 439-459 (AGLV…AALF).

This sequence belongs to the complex I subunit 2 family. NDH-1 is composed of 14 different subunits. Subunits NuoA, H, J, K, L, M, N constitute the membrane sector of the complex.

The protein resides in the cell inner membrane. The enzyme catalyses a quinone + NADH + 5 H(+)(in) = a quinol + NAD(+) + 4 H(+)(out). Its function is as follows. NDH-1 shuttles electrons from NADH, via FMN and iron-sulfur (Fe-S) centers, to quinones in the respiratory chain. The immediate electron acceptor for the enzyme in this species is believed to be ubiquinone. Couples the redox reaction to proton translocation (for every two electrons transferred, four hydrogen ions are translocated across the cytoplasmic membrane), and thus conserves the redox energy in a proton gradient. This is NADH-quinone oxidoreductase subunit N 1 from Solidesulfovibrio magneticus (strain ATCC 700980 / DSM 13731 / RS-1) (Desulfovibrio magneticus).